A 611-amino-acid polypeptide reads, in one-letter code: POU domain, class 6, transcription factor 1 (611 aa).

Residues 62–93 (ASQAAGEAGPDNLGSSAEATVKSPPGIPPSPA) form a disordered region. Residues 449–523 (EDGINLEEIR…VLEKWLNEAE (75 aa)) form the POU-specific domain. The homeobox DNA-binding region spans 544-603 (KRKRRTSFTPQAIEALNAYFEKNPLPTGQEITEIAKELNYDREVVRVWFCNRRQTLKNTS).

Belongs to the POU transcription factor family. Class-6 subfamily. In terms of tissue distribution, in the embryo, expressed exclusively in the developing brain, whereas in the adult its expression is restricted to brain, heart, skeletal muscle and lung. In the brain, the highest expression levels are found in specific cell layers of the cortex, the olfactory bulb, the hippocampus and the cerebellum.

The protein resides in the nucleus. Transcription factor that binds preferentially to a variant of the octamer motif (5'-ATGATAAT-3'). The sequence is that of POU domain, class 6, transcription factor 1 (POU6F1) from Homo sapiens (Human).